Here is a 363-residue protein sequence, read N- to C-terminus: Chorismate synthase (363 aa).

Residues R48 and R54 each contribute to the NADP(+) site. FMN is bound by residues 125–127, 237–238, G277, 292–296, and R318; these read RSS, NA, and KPTSS.

It belongs to the chorismate synthase family. As to quaternary structure, homotetramer. FMNH2 is required as a cofactor.

The catalysed reaction is 5-O-(1-carboxyvinyl)-3-phosphoshikimate = chorismate + phosphate. Its pathway is metabolic intermediate biosynthesis; chorismate biosynthesis; chorismate from D-erythrose 4-phosphate and phosphoenolpyruvate: step 7/7. Catalyzes the anti-1,4-elimination of the C-3 phosphate and the C-6 proR hydrogen from 5-enolpyruvylshikimate-3-phosphate (EPSP) to yield chorismate, which is the branch point compound that serves as the starting substrate for the three terminal pathways of aromatic amino acid biosynthesis. This reaction introduces a second double bond into the aromatic ring system. The polypeptide is Chorismate synthase (Ectopseudomonas mendocina (strain ymp) (Pseudomonas mendocina)).